A 274-amino-acid polypeptide reads, in one-letter code: Leucyl/phenylalanyl-tRNA--protein transferase (274 aa).

Belongs to the L/F-transferase family.

It localises to the cytoplasm. The catalysed reaction is N-terminal L-lysyl-[protein] + L-leucyl-tRNA(Leu) = N-terminal L-leucyl-L-lysyl-[protein] + tRNA(Leu) + H(+). The enzyme catalyses N-terminal L-arginyl-[protein] + L-leucyl-tRNA(Leu) = N-terminal L-leucyl-L-arginyl-[protein] + tRNA(Leu) + H(+). It catalyses the reaction L-phenylalanyl-tRNA(Phe) + an N-terminal L-alpha-aminoacyl-[protein] = an N-terminal L-phenylalanyl-L-alpha-aminoacyl-[protein] + tRNA(Phe). Functions in the N-end rule pathway of protein degradation where it conjugates Leu, Phe and, less efficiently, Met from aminoacyl-tRNAs to the N-termini of proteins containing an N-terminal arginine or lysine. The sequence is that of Leucyl/phenylalanyl-tRNA--protein transferase from Psychrobacter cryohalolentis (strain ATCC BAA-1226 / DSM 17306 / VKM B-2378 / K5).